The sequence spans 124 residues: Acidic phospholipase A2 A (124 aa).

Intrachain disulfides connect C26–C116, C28–C44, C43–C95, C49–C124, C50–C88, C57–C81, and C75–C86. Positions 27, 29, and 31 each coordinate Ca(2+). Residue H47 is part of the active site. Ca(2+) is bound at residue D48. D89 is a catalytic residue.

The protein belongs to the phospholipase A2 family. Group II subfamily. D49 sub-subfamily. It depends on Ca(2+) as a cofactor. In terms of tissue distribution, expressed by the venom gland.

Its subcellular location is the secreted. It carries out the reaction a 1,2-diacyl-sn-glycero-3-phosphocholine + H2O = a 1-acyl-sn-glycero-3-phosphocholine + a fatty acid + H(+). PLA2 catalyzes the calcium-dependent hydrolysis of the 2-acyl groups in 3-sn-phosphoglycerides. The sequence is that of Acidic phospholipase A2 A from Gloydius halys (Chinese water mocassin).